The following is a 296-amino-acid chain: 4-hydroxy-tetrahydrodipicolinate synthase (296 aa).

Pyruvate is bound at residue Thr-49. Residue Tyr-137 is the Proton donor/acceptor of the active site. Lys-166 acts as the Schiff-base intermediate with substrate in catalysis. A pyruvate-binding site is contributed by Ile-208.

It belongs to the DapA family. As to quaternary structure, homotetramer; dimer of dimers.

It is found in the cytoplasm. The catalysed reaction is L-aspartate 4-semialdehyde + pyruvate = (2S,4S)-4-hydroxy-2,3,4,5-tetrahydrodipicolinate + H2O + H(+). It functions in the pathway amino-acid biosynthesis; L-lysine biosynthesis via DAP pathway; (S)-tetrahydrodipicolinate from L-aspartate: step 3/4. In terms of biological role, catalyzes the condensation of (S)-aspartate-beta-semialdehyde [(S)-ASA] and pyruvate to 4-hydroxy-tetrahydrodipicolinate (HTPA). This is 4-hydroxy-tetrahydrodipicolinate synthase from Chlorobium phaeobacteroides (strain DSM 266 / SMG 266 / 2430).